We begin with the raw amino-acid sequence, 76 residues long: Putative small nuclear ribonucleoprotein G-like protein 15 (76 aa).

Positions 4-76 constitute a Sm domain; that stretch reads AHPPELKKFT…IIMLEALERV (73 aa).

The protein belongs to the snRNP Sm proteins family.

Its subcellular location is the nucleus. Its function is as follows. Associated with snRNP U1, U2, U4/U6 and U5. The chain is Putative small nuclear ribonucleoprotein G-like protein 15 (SNRPGP15) from Homo sapiens (Human).